Here is a 136-residue protein sequence, read N- to C-terminus: Holo-[acyl-carrier-protein] synthase (136 aa).

Mg(2+) is bound by residues aspartate 8 and glutamate 57.

It belongs to the P-Pant transferase superfamily. AcpS family. It depends on Mg(2+) as a cofactor.

The protein resides in the cytoplasm. The catalysed reaction is apo-[ACP] + CoA = holo-[ACP] + adenosine 3',5'-bisphosphate + H(+). Transfers the 4'-phosphopantetheine moiety from coenzyme A to a Ser of acyl-carrier-protein. The sequence is that of Holo-[acyl-carrier-protein] synthase from Azorhizobium caulinodans (strain ATCC 43989 / DSM 5975 / JCM 20966 / LMG 6465 / NBRC 14845 / NCIMB 13405 / ORS 571).